The chain runs to 351 residues: Glycerol-3-phosphate dehydrogenase 1-like protein (351 aa).

12 to 17 (GSGNWG) contacts NAD(+). Residue lysine 122 participates in substrate binding. Position 155 (alanine 155) interacts with NAD(+). Lysine 206 functions as the Proton acceptor in the catalytic mechanism. Positions 271, 298, and 300 each coordinate NAD(+). A substrate-binding site is contributed by 271-272 (RN).

The protein belongs to the NAD-dependent glycerol-3-phosphate dehydrogenase family. As to quaternary structure, interacts with SCN5A. As to expression, most highly expressed in heart tissue, with lower levels in the skeletal muscle, kidney, lung and other organs.

Its subcellular location is the cytoplasm. It catalyses the reaction sn-glycerol 3-phosphate + NAD(+) = dihydroxyacetone phosphate + NADH + H(+). Its function is as follows. Plays a role in regulating cardiac sodium current; decreased enzymatic activity with resulting increased levels of glycerol 3-phosphate activating the DPD1L-dependent SCN5A phosphorylation pathway, may ultimately lead to decreased sodium current; cardiac sodium current may also be reduced due to alterations of NAD(H) balance induced by DPD1L. The polypeptide is Glycerol-3-phosphate dehydrogenase 1-like protein (Homo sapiens (Human)).